Reading from the N-terminus, the 236-residue chain is MSDDAVKQMKQVVAKAAADRVQSGMVVGLGTGSTTAFVIQFLGDRLRKGELSNIVGVPTSFQASVLAKKYGIPLVTLDDVEKLDIAIDGADEVDPAKNLIKGGGAAHTREKIVDSLAEQFLVVVDSSKLVQKLGSTFPVPVEVLPFAVAPVTRALKALGGEPELRMGVKKDGPVVTDQGNFVLDVRFDDIPDPAELEKAINNIPGVVENGLFVNVADVILVGEIVDGQPQVREIFH.

Substrate-binding positions include 31–34 (TGST), 88–91 (DGAD), and 101–104 (KGGG). Glu110 (proton acceptor) is an active-site residue. Lys128 is a binding site for substrate.

This sequence belongs to the ribose 5-phosphate isomerase family. Homodimer.

The enzyme catalyses aldehydo-D-ribose 5-phosphate = D-ribulose 5-phosphate. It participates in carbohydrate degradation; pentose phosphate pathway; D-ribose 5-phosphate from D-ribulose 5-phosphate (non-oxidative stage): step 1/1. Its function is as follows. Catalyzes the reversible conversion of ribose-5-phosphate to ribulose 5-phosphate. The polypeptide is Ribose-5-phosphate isomerase A (Thermosynechococcus vestitus (strain NIES-2133 / IAM M-273 / BP-1)).